An 839-amino-acid polypeptide reads, in one-letter code: DNA (cytosine-5)-methyltransferase CMT3 (839 aa).

Disordered regions lie at residues Met-1–Thr-38 and Leu-51–Asp-86. Positions Pro-19–Lys-30 are enriched in basic residues. Basic and acidic residues predominate over residues Leu-51 to Pro-70. The region spanning Gln-108 to Gln-227 is the BAH domain. The region spanning Ala-269 to Leu-813 is the SAM-dependent MTase C5-type domain. In terms of domain architecture, Chromo spans Phe-382–Leu-447. Cys-460 is a catalytic residue.

It belongs to the class I-like SAM-binding methyltransferase superfamily. C5-methyltransferase family. Homodimer. Interacts with HP1 and, through its chromodomain, with the N-terminal tail of histone H3 doubly methylated at 'Lys-9' and 'Lys-27'. Binds to JMJ24. Ubiquitinated by JMJ24, subsequently beingargeted to proteasomal degradation thus initiating the destabilization of the heterochromatic state of endogenous silenced loci.

The protein resides in the nucleus. The catalysed reaction is a 2'-deoxycytidine in DNA + S-adenosyl-L-methionine = a 5-methyl-2'-deoxycytidine in DNA + S-adenosyl-L-homocysteine + H(+). Functionally, involved in the CpXpG methylation (e.g. CHG cytosine) and in gene silencing. Methylates preferentially transposon-related sequences. Functionally redundant to DRM1/DRM2 to maintain non-CpG methylation. Involved in RNA-directed DNA methylation. This is DNA (cytosine-5)-methyltransferase CMT3 from Arabidopsis thaliana (Mouse-ear cress).